Here is an 80-residue protein sequence, read N- to C-terminus: Metallothionein-like protein type 2, MT2-22 (80 aa).

It belongs to the metallothionein superfamily. Type 15 family.

In terms of biological role, metallothioneins have a high content of cysteine residues that bind various heavy metals. The polypeptide is Metallothionein-like protein type 2, MT2-22 (Brassica juncea (Indian mustard)).